Consider the following 340-residue polypeptide: Sodium/bile acid cotransporter 7 (340 aa).

Residues 1–10 (MRLLERVRKE) are Cytoplasmic-facing. Residues 11–31 (WFMVGIVVAIGAAKLEPSVGV) traverse the membrane as a helical segment. The Extracellular segment spans residues 32-37 (NGGPLK). A helical transmembrane segment spans residues 38–58 (PEITVSYIAVATIFFNSGLSL). Residues 59–71 (KTEELTSALVHLK) are Cytoplasmic-facing. A helical membrane pass occupies residues 72 to 92 (LHLFIQVFTLAFFPTTIWLFL). The Extracellular portion of the chain corresponds to 93–116 (QLLSVTSINEWLLKGLQTVGCMPP). The helical transmembrane segment at 117–137 (PVSSAVILTKAVGGNEAAAIF) threads the bilayer. Asn-138 is a topological domain (cytoplasmic). The chain crosses the membrane as a helical span at residues 139 to 159 (SAFGSFLGIVVTPVLLLLFLG). At 160–163 (SSSS) the chain is on the extracellular side. The chain crosses the membrane as a helical span at residues 164–184 (VPFTSIFSQLFMTVVVPLVIG). Topologically, residues 185 to 201 (QIVRRYIKDWLERKKPP) are cytoplasmic. The chain crosses the membrane as a helical span at residues 202–222 (FGVVSSSVLLMIIYTTFCDTF). Residues 223-234 (SNPNIDLDKFSL) lie on the Extracellular side of the membrane. Residues 235–255 (ILILFIIVSIQLSFMLLTFVF) form a helical membrane-spanning segment. The Cytoplasmic segment spans residues 256–270 (STRNNSGFTPADTVA). Residues 271–291 (IIFCSTHKSLTLGIPMLKIVF) traverse the membrane as a helical segment. Residues 292–298 (AGHEHLS) lie on the Extracellular side of the membrane. A helical membrane pass occupies residues 299–319 (LISLPLLIYHPAQILLGSVLV). Over 320–340 (PTIKSWMVSRQKGVKLTRPTV) the chain is Cytoplasmic.

Belongs to the bile acid:sodium symporter (BASS) (TC 2.A.28) family. Strongly expressed in liver, adrenal gland, small intestine and colon. Moderately expressed in heart, lung, kidney and spleen. Weakly expressed in brain.

The protein resides in the cell membrane. Its subcellular location is the endoplasmic reticulum membrane. It localises to the golgi apparatus membrane. Involved in teeth and skeletal development. Has an essential role in the biosynthesis and trafficking of glycosaminoglycans and glycoproteins to produce a proper functioning extracellular matrix. Required for extracellular matrix mineralization. Also involved in the regulation of cellular calcium homeostasis. Does not show transport activity towards bile acids or steroid sulfates (including taurocholate, cholate, chenodeoxycholate, estrone-3-sulfate, dehydroepiandrosterone sulfate (DHEAS) and pregnenolone sulfate). The polypeptide is Sodium/bile acid cotransporter 7 (Slc10a7) (Rattus norvegicus (Rat)).